A 346-amino-acid polypeptide reads, in one-letter code: Small glutamine-rich tetratricopeptide repeat-containing protein 2 (346 aa).

TPR repeat units follow at residues 102 to 135 (AEDLKMQGNKAMANKDYELAINKYTEAIKVLPTN), 136 to 169 (AIYYANRAAAHSSLKEYDQAVKDAESAISIDPSY), 170 to 203 (FRGYSRLGFAKYAQGKPEEALEAYKKVLDIEGDN), and 205 to 229 (TEAMKRDYESAKKKVEQSLNLEKTV). The segment at 219-249 (VEQSLNLEKTVPEQSRDADVDASQGASAGGL) is disordered. Over residues 228–237 (TVPEQSRDAD) the composition is skewed to basic and acidic residues. A Phosphothreonine modification is found at T308. A disordered region spans residues 325–346 (GNLFGGAGAQSTDETPDNENKQ).

This sequence belongs to the SGT family. As to quaternary structure, interacts with HSC82, HSP104, MDY2, SSA1 and SSA2.

It localises to the cytoplasm. Its function is as follows. Co-chaperone that binds to the molecular chaperone Hsp70 (SSA1 and SSA2). Regulates Hsp70 ATPase activity. Required for recovery from heat shock. The chain is Small glutamine-rich tetratricopeptide repeat-containing protein 2 (SGT2) from Saccharomyces cerevisiae (strain ATCC 204508 / S288c) (Baker's yeast).